Consider the following 118-residue polypeptide: Ribosome-binding factor A (118 aa).

It belongs to the RbfA family. As to quaternary structure, monomer. Binds 30S ribosomal subunits, but not 50S ribosomal subunits or 70S ribosomes.

It localises to the cytoplasm. Its function is as follows. One of several proteins that assist in the late maturation steps of the functional core of the 30S ribosomal subunit. Associates with free 30S ribosomal subunits (but not with 30S subunits that are part of 70S ribosomes or polysomes). Required for efficient processing of 16S rRNA. May interact with the 5'-terminal helix region of 16S rRNA. The polypeptide is Ribosome-binding factor A (Bacillus cereus (strain B4264)).